Consider the following 842-residue polypeptide: Probable cleavage and polyadenylation specificity factor subunit 2 (842 aa).

Residues 414–425 (AEETRIRMERAR) show a composition bias toward basic and acidic residues. Disordered stretches follow at residues 414–442 (AEET…DDIA) and 708–747 (METF…SIPI). Residues 432 to 441 (ESDDSDDDDI) show a composition bias toward acidic residues. Residues 731–747 (SNGQSKENDENASSIPI) are compositionally biased toward polar residues.

The protein belongs to the metallo-beta-lactamase superfamily. RNA-metabolizing metallo-beta-lactamase-like family. CPSF2/YSH1 subfamily. In terms of assembly, CPSF is a heterotetramer composed of four distinct subunits 160, 100, 70 and 30 kDa.

Its subcellular location is the nucleus. CPSF plays a key role in pre-mRNA 3'-end formation, recognizing the AAUAAA signal sequence and interacting with poly(A)polymerase and other factors to bring about cleavage and poly(A) addition. The chain is Probable cleavage and polyadenylation specificity factor subunit 2 from Caenorhabditis briggsae.